A 307-amino-acid polypeptide reads, in one-letter code: MLVEGSELQSGAQQPRTEAPQHGELQYLRQVEHIMRCGFKKEDRTGTGTLSVFGMQARYSLRDEFPLLTTKRVFWKGVLEELLWFIKGSTNAKELSSKGVRIWDANGSRDFLDSLGFSARQEGDLGPVYGFQWRHFGADYKDMDSDYSGQGVDQLQKVIDTIKTNPDDRRIIMCAWNPKDLPLMALPPCHALCQFYVVNGELSCQLYQRSGDMGLGVPFNIASYALLTYMIAHITGLQPGDFVHTLGDAHIYLNHIEPLKIQLQREPRPFPKLRILRKVETIDDFKVEDFQIEGYNPHPTIKMEMAV.

Residues 1–22 are disordered; that stretch reads MLVEGSELQSGAQQPRTEAPQH. Residues 7-16 show a composition bias toward polar residues; sequence ELQSGAQQPR. Residue R44 participates in dUMP binding. Position 108 is a phosphoserine (S108). Residues 169–170, 189–190, 209–212, N220, and 250–252 each bind dUMP; these read RR, CH, RSGD, and HIY. The Nucleophile role is filled by C189. A (6R)-5,10-methylene-5,6,7,8-tetrahydrofolate-binding site is contributed by D212. Glycyl lysine isopeptide (Lys-Gly) (interchain with G-Cter in SUMO2) cross-links involve residues K286 and K302. A (6R)-5,10-methylene-5,6,7,8-tetrahydrofolate-binding site is contributed by A306.

It belongs to the thymidylate synthase family. As to quaternary structure, homodimer.

The protein resides in the nucleus. The protein localises to the cytoplasm. Its subcellular location is the mitochondrion. It is found in the mitochondrion matrix. It localises to the mitochondrion inner membrane. It catalyses the reaction dUMP + (6R)-5,10-methylene-5,6,7,8-tetrahydrofolate = 7,8-dihydrofolate + dTMP. The protein operates within pyrimidine metabolism; dTTP biosynthesis. In terms of biological role, catalyzes the reductive methylation of 2'-deoxyuridine 5'-monophosphate (dUMP) to thymidine 5'-monophosphate (dTMP), using the cosubstrate, 5,10- methylenetetrahydrofolate (CH2H4folate) as a 1-carbon donor and reductant and contributes to the de novo mitochondrial thymidylate biosynthesis pathway. In Rattus norvegicus (Rat), this protein is Thymidylate synthase (Tyms).